The primary structure comprises 750 residues: Olfactomedin-like protein 2B (750 aa).

A signal peptide spans 1-22 (MAKPRLLVLYFALIVVPAWVSS). Coiled coils occupy residues 40–68 (AEDE…KVKA) and 179–213 (KLEE…GKEN). Residues asparagine 187 and asparagine 213 are each glycosylated (N-linked (GlcNAc...) asparagine). Disordered stretches follow at residues 346–437 (TRRP…PPAV) and 452–484 (VPPT…PEEE). 2 stretches are compositionally biased toward polar residues: residues 354–384 (QGHS…SDPS) and 393–413 (PTLQ…LQPS). The segment covering 416–430 (VPATTVAHTATQQPA) has biased composition (low complexity). One can recognise an Olfactomedin-like domain in the interval 493-750 (RCKDTLSTIT…QVTYHVIFAY (258 aa)). Cysteine 494 and cysteine 680 form a disulfide bridge. N-linked (GlcNAc...) asparagine glycosylation occurs at asparagine 695.

Homodimer. Binds to heparin and chondroitin sulfate E. O-glycosylated and N-glycosylated.

Its subcellular location is the secreted. This chain is Olfactomedin-like protein 2B (OLFML2B), found in Homo sapiens (Human).